We begin with the raw amino-acid sequence, 135 residues long: Large ribosomal subunit protein bL21 (135 aa).

Residues 109-128 are compositionally biased toward polar residues; that stretch reads TLATAQSAPPSTSEATTDTT. The tract at residues 109–135 is disordered; the sequence is TLATAQSAPPSTSEATTDTTGIPAAEE.

The protein belongs to the bacterial ribosomal protein bL21 family. As to quaternary structure, part of the 50S ribosomal subunit. Contacts protein L20.

This protein binds to 23S rRNA in the presence of protein L20. This is Large ribosomal subunit protein bL21 from Synechococcus sp. (strain JA-3-3Ab) (Cyanobacteria bacterium Yellowstone A-Prime).